The chain runs to 385 residues: Lipid-A-disaccharide synthase 2 (385 aa).

It belongs to the LpxB family.

It catalyses the reaction a lipid X + a UDP-2-N,3-O-bis[(3R)-3-hydroxyacyl]-alpha-D-glucosamine = a lipid A disaccharide + UDP + H(+). Its pathway is bacterial outer membrane biogenesis; LPS lipid A biosynthesis. In terms of biological role, condensation of UDP-2,3-diacylglucosamine and 2,3-diacylglucosamine-1-phosphate to form lipid A disaccharide, a precursor of lipid A, a phosphorylated glycolipid that anchors the lipopolysaccharide to the outer membrane of the cell. The polypeptide is Lipid-A-disaccharide synthase 2 (Legionella pneumophila (strain Lens)).